Consider the following 361-residue polypeptide: Chorismate synthase (361 aa).

Positions 48 and 54 each coordinate NADP(+). FMN is bound by residues 131–133, 243–244, Gly287, 302–306, and Arg328; these read RSS, NA, and KPTSS.

Belongs to the chorismate synthase family. Homotetramer. It depends on FMNH2 as a cofactor.

The enzyme catalyses 5-O-(1-carboxyvinyl)-3-phosphoshikimate = chorismate + phosphate. It participates in metabolic intermediate biosynthesis; chorismate biosynthesis; chorismate from D-erythrose 4-phosphate and phosphoenolpyruvate: step 7/7. Functionally, catalyzes the anti-1,4-elimination of the C-3 phosphate and the C-6 proR hydrogen from 5-enolpyruvylshikimate-3-phosphate (EPSP) to yield chorismate, which is the branch point compound that serves as the starting substrate for the three terminal pathways of aromatic amino acid biosynthesis. This reaction introduces a second double bond into the aromatic ring system. This is Chorismate synthase from Rhodopseudomonas palustris (strain HaA2).